Consider the following 377-residue polypeptide: Histidinol-phosphate aminotransferase (377 aa).

N6-(pyridoxal phosphate)lysine is present on lysine 232.

This sequence belongs to the class-II pyridoxal-phosphate-dependent aminotransferase family. Histidinol-phosphate aminotransferase subfamily. In terms of assembly, homodimer. Pyridoxal 5'-phosphate serves as cofactor.

The catalysed reaction is L-histidinol phosphate + 2-oxoglutarate = 3-(imidazol-4-yl)-2-oxopropyl phosphate + L-glutamate. Its pathway is amino-acid biosynthesis; L-histidine biosynthesis; L-histidine from 5-phospho-alpha-D-ribose 1-diphosphate: step 7/9. This chain is Histidinol-phosphate aminotransferase, found in Mycobacterium sp. (strain JLS).